The sequence spans 96 residues: Small ribosomal subunit protein bS6 (96 aa).

It belongs to the bacterial ribosomal protein bS6 family.

In terms of biological role, binds together with bS18 to 16S ribosomal RNA. The polypeptide is Small ribosomal subunit protein bS6 (rpsF) (Mycobacterium bovis (strain ATCC BAA-935 / AF2122/97)).